The chain runs to 625 residues: DNA mismatch repair protein MutL (625 aa).

Residues 404–427 (PPPRNAPQSTGMPSMAGTGLPATS) form a disordered region.

The protein belongs to the DNA mismatch repair MutL/HexB family.

This protein is involved in the repair of mismatches in DNA. It is required for dam-dependent methyl-directed DNA mismatch repair. May act as a 'molecular matchmaker', a protein that promotes the formation of a stable complex between two or more DNA-binding proteins in an ATP-dependent manner without itself being part of a final effector complex. The protein is DNA mismatch repair protein MutL of Xanthomonas oryzae pv. oryzae (strain MAFF 311018).